The chain runs to 178 residues: Probable chorismate pyruvate-lyase (178 aa).

Positions 72, 110, and 169 each coordinate substrate.

The protein belongs to the UbiC family.

Its subcellular location is the cytoplasm. The enzyme catalyses chorismate = 4-hydroxybenzoate + pyruvate. It functions in the pathway cofactor biosynthesis; ubiquinone biosynthesis. Functionally, removes the pyruvyl group from chorismate, with concomitant aromatization of the ring, to provide 4-hydroxybenzoate (4HB) for the ubiquinone pathway. The chain is Probable chorismate pyruvate-lyase from Nitrosomonas eutropha (strain DSM 101675 / C91 / Nm57).